A 225-amino-acid polypeptide reads, in one-letter code: Protein-L-isoaspartate O-methyltransferase (225 aa).

S75 is an active-site residue.

Belongs to the methyltransferase superfamily. L-isoaspartyl/D-aspartyl protein methyltransferase family.

It localises to the cytoplasm. It carries out the reaction [protein]-L-isoaspartate + S-adenosyl-L-methionine = [protein]-L-isoaspartate alpha-methyl ester + S-adenosyl-L-homocysteine. Catalyzes the methyl esterification of L-isoaspartyl residues in peptides and proteins that result from spontaneous decomposition of normal L-aspartyl and L-asparaginyl residues. It plays a role in the repair and/or degradation of damaged proteins. In Stenotrophomonas maltophilia (strain R551-3), this protein is Protein-L-isoaspartate O-methyltransferase.